Here is an 864-residue protein sequence, read N- to C-terminus: DNA mismatch repair protein MutS (864 aa).

G607–S614 serves as a coordination point for ATP.

It belongs to the DNA mismatch repair MutS family.

In terms of biological role, this protein is involved in the repair of mismatches in DNA. It is possible that it carries out the mismatch recognition step. This protein has a weak ATPase activity. The chain is DNA mismatch repair protein MutS from Neisseria meningitidis serogroup B (strain ATCC BAA-335 / MC58).